The primary structure comprises 104 residues: Co-chaperonin GroES 2 (104 aa).

The protein belongs to the GroES chaperonin family. As to quaternary structure, heptamer of 7 subunits arranged in a ring. Interacts with the chaperonin GroEL.

The protein localises to the cytoplasm. Together with the chaperonin GroEL, plays an essential role in assisting protein folding. The GroEL-GroES system forms a nano-cage that allows encapsulation of the non-native substrate proteins and provides a physical environment optimized to promote and accelerate protein folding. GroES binds to the apical surface of the GroEL ring, thereby capping the opening of the GroEL channel. This is Co-chaperonin GroES 2 from Mesorhizobium japonicum (strain LMG 29417 / CECT 9101 / MAFF 303099) (Mesorhizobium loti (strain MAFF 303099)).